A 32-amino-acid chain; its full sequence is Dermaseptin-8 (32 aa).

Q32 bears the Glutamine amide mark.

As to expression, expressed by the skin glands.

It localises to the secreted. Functionally, antimicrobial peptide, active against the Gram-positive bacterium S.aureus, and the Gram-negative bacteriun E.coli. Has hemolytic activity at 432 uM. The polypeptide is Dermaseptin-8 (Phyllomedusa tarsius (Brownbelly leaf frog)).